Here is a 303-residue protein sequence, read N- to C-terminus: uncharacterized protein (303 aa).

This is an uncharacterized protein from Archaeoglobus fulgidus (strain ATCC 49558 / DSM 4304 / JCM 9628 / NBRC 100126 / VC-16).